The sequence spans 511 residues: Vesicular acetylcholine transporter (511 aa).

The Cytoplasmic portion of the chain corresponds to 1-36; that stretch reads MVVGQAKAAMGKISSAIGERSKRISGAMNEPLRKRK. Residues 37–57 traverse the membrane as a helical segment; the sequence is ILLVIVCIAMLLDNMLYMVIV. Over 58-108 the chain is Lumenal, vesicle; it reads PIVPNYLETIRTYKLVYITIPSNGTNGSLLNSTQRAVLERNPNANEDIQIG. N-linked (GlcNAc...) asparagine glycosylation is found at Asn-80, Asn-83, and Asn-88. The chain crosses the membrane as a helical span at residues 109-129; that stretch reads VLFASKAILQLLSNPFTGTFI. The Cytoplasmic segment spans residues 130–135; that stretch reads DRVGYD. Residues 136–156 form a helical membrane-spanning segment; that stretch reads IPLLIGLTIMFFSTITFAFGE. Residues 157–165 lie on the Lumenal, vesicle side of the membrane; that stretch reads SYAILFAAR. Residues 166-186 traverse the membrane as a helical segment; that stretch reads SLQGLGSAFADTSGIAMIADK. At 187 to 197 the chain is on the cytoplasmic side; the sequence is YTEESERTQAL. A helical membrane pass occupies residues 198–218; the sequence is GIALAFISFGSLVAPPFGGVL. Over 219–225 the chain is Lumenal, vesicle; the sequence is YQFAGKW. Residues 226–246 form a helical membrane-spanning segment; the sequence is VPFLVLSFVCLLDGILLLMVV. At 247 to 267 the chain is on the cytoplasmic side; that stretch reads TPFASRTRGNTLQGTPIHKLM. The helical transmembrane segment at 268–288 threads the bilayer; that stretch reads IDPYIAVVAGALTTCNIPLAF. Residues 289 to 306 are Lumenal, vesicle-facing; it reads LEPTISNWMKKTMNASEW. The N-linked (GlcNAc...) asparagine glycan is linked to Asn-302. A helical transmembrane segment spans residues 307–327; that stretch reads QMGITWLPAFFPHILGVYITV. Topologically, residues 328-337 are cytoplasmic; the sequence is KLAAKYPNYQ. A helical transmembrane segment spans residues 338–358; sequence WLYGAFGLVIIGVSSCTIPAC. The Lumenal, vesicle portion of the chain corresponds to 359–363; the sequence is RNFEE. Residues 364-384 traverse the membrane as a helical segment; that stretch reads LIIPLCALCFGIALVDTALLP. At 385–400 the chain is on the cytoplasmic side; that stretch reads TLAFLVDIRYVSVYGS. Residues 401–421 traverse the membrane as a helical segment; sequence VYAIADISYSVAYALGPIMAG. The Lumenal, vesicle portion of the chain corresponds to 422 to 428; sequence QIVHDLG. A helical transmembrane segment spans residues 429–449; that stretch reads FVQLNLGMGLVNILYAPALLF. At 450–511 the chain is on the cytoplasmic side; sequence LRNVCQMKPS…VLSDQEGYSE (62 aa). The disordered stretch occupies residues 486-511; sequence AKEPHGTSSGNHSVHAVLSDQEGYSE.

It belongs to the major facilitator superfamily. Vesicular transporter family. As to expression, high expression in the electric lobe of the brain.

The protein localises to the membrane. Involved in acetylcholine transport into synaptic vesicles. The protein is Vesicular acetylcholine transporter of Torpedo torpedo (Common torpedo).